The following is a 247-amino-acid chain: Aspartate/glutamate leucyltransferase (247 aa).

Belongs to the R-transferase family. Bpt subfamily.

It localises to the cytoplasm. It carries out the reaction N-terminal L-glutamyl-[protein] + L-leucyl-tRNA(Leu) = N-terminal L-leucyl-L-glutamyl-[protein] + tRNA(Leu) + H(+). The catalysed reaction is N-terminal L-aspartyl-[protein] + L-leucyl-tRNA(Leu) = N-terminal L-leucyl-L-aspartyl-[protein] + tRNA(Leu) + H(+). Functions in the N-end rule pathway of protein degradation where it conjugates Leu from its aminoacyl-tRNA to the N-termini of proteins containing an N-terminal aspartate or glutamate. This is Aspartate/glutamate leucyltransferase from Dechloromonas aromatica (strain RCB).